Consider the following 193-residue polypeptide: Imidazoleglycerol-phosphate dehydratase (193 aa).

This sequence belongs to the imidazoleglycerol-phosphate dehydratase family.

The protein resides in the cytoplasm. It carries out the reaction D-erythro-1-(imidazol-4-yl)glycerol 3-phosphate = 3-(imidazol-4-yl)-2-oxopropyl phosphate + H2O. It functions in the pathway amino-acid biosynthesis; L-histidine biosynthesis; L-histidine from 5-phospho-alpha-D-ribose 1-diphosphate: step 6/9. This is Imidazoleglycerol-phosphate dehydratase from Sulfolobus acidocaldarius (strain ATCC 33909 / DSM 639 / JCM 8929 / NBRC 15157 / NCIMB 11770).